The chain runs to 514 residues: Sugar transport protein 4 (514 aa).

Residues 1–22 (MAGGFVSQTPGVRNYNYKLTPK) are Cytoplasmic-facing. 12 helical membrane passes run 23–43 (VFVT…DLGI), 80–100 (LLTL…LFAS), 117–137 (FTFF…MLLI), 140–160 (ILLG…LSEM), 172–192 (GFQV…YFTA), 202–222 (ISLG…LILP), 283–303 (LIMT…VITF), 321–341 (LSAM…VFTV), 348–368 (ILFL…GAMI), 387–407 (LIVA…GPLG), 426–446 (INVS…LTML), and 451–471 (FGLF…IYLM). Residues 472 to 514 (LPETKNVPIEEMNRVWKAHWFWGKFIPDEAVNMGAAEMQQKSV) are Cytoplasmic-facing.

This sequence belongs to the major facilitator superfamily. Sugar transporter (TC 2.A.1.1) family. Mostly in flowers and roots, especially in anthers, including pollen, and root tips. Also present in some hydathodes.

Its subcellular location is the cell membrane. In terms of biological role, mediates an active uptake of hexoses, probably by sugar/hydrogen symport. Can transport glucose, methylglucose, galactose, xylose and mannose, but not fructose. This chain is Sugar transport protein 4 (STP4), found in Arabidopsis thaliana (Mouse-ear cress).